We begin with the raw amino-acid sequence, 138 residues long: MAALPDKDKLLRNFSRCANWEEKYLYIIELGQRLAPLSPEEYSVQNIIQGCQSQVWIVMAQDPSGIITLRGDSDAAIVKGLIAVVFILYDRMTAQDIIEFDVRPWFEKMALTQHLTPSRSQGLEAMIRAIRAKAANIS.

The active-site Cysteine persulfide intermediate is C51.

The protein belongs to the SufE family. In terms of assembly, homodimer. Interacts with SufS.

The protein localises to the cytoplasm. It functions in the pathway cofactor biosynthesis; iron-sulfur cluster biosynthesis. Functionally, participates in cysteine desulfuration mediated by SufS. Cysteine desulfuration mobilizes sulfur from L-cysteine to yield L-alanine and constitutes an essential step in sulfur metabolism for biosynthesis of a variety of sulfur-containing biomolecules. Functions as a sulfur acceptor for SufS, by mediating the direct transfer of the sulfur atom from the S-sulfanylcysteine of SufS, an intermediate product of cysteine desulfuration process. The sequence is that of Cysteine desulfuration protein SufE from Klebsiella pneumoniae (strain 342).